The primary structure comprises 382 residues: UBP1-associated proteins 1B (382 aa).

Residues 1–99 (MAKEGEERKK…SDESEEIVDS (99 aa)) form a disordered region. The segment covering 10 to 22 (KEKKEKKERKERK) has biased composition (basic residues). Over residues 23 to 34 (RREAEELAVREK) the composition is skewed to basic and acidic residues. Residues 163–248 (RNIFVRGLGW…RPFNSGKPRE (86 aa)) enclose the RRM domain.

It is found in the nucleus. Its function is as follows. Acts as a component of a complex regulating the turnover of mRNAs in the nucleus. Binds with high affinity to RNA molecules that contain U-rich sequences in 3'-UTRs. May function in complex with UBP1 and contribute to the stabilization of mRNAs in the nucleus. In Arabidopsis thaliana (Mouse-ear cress), this protein is UBP1-associated proteins 1B (UBA1B).